A 312-amino-acid polypeptide reads, in one-letter code: uncharacterized protein (312 aa).

Positions 1 to 19 (MFSKYLVTASSLFVALTSA) are cleaved as a signal peptide.

This is an uncharacterized protein from Saccharomyces cerevisiae (strain ATCC 204508 / S288c) (Baker's yeast).